The sequence spans 70 residues: Protein tam14 (70 aa).

The segment covering methionine 1–asparagine 19 has biased composition (polar residues). The interval methionine 1–isoleucine 20 is disordered. A helical membrane pass occupies residues isoleucine 45–leucine 65.

It belongs to the RAMP4 family.

It localises to the membrane. It is found in the endoplasmic reticulum membrane. In terms of biological role, interacts with target proteins during their translocation into the lumen of the endoplasmic reticulum. Protects unfolded target proteins against degradation during ER stress. May facilitate glycosylation of target proteins after termination of ER stress. This is Protein tam14 (tam14) from Schizosaccharomyces pombe (strain 972 / ATCC 24843) (Fission yeast).